The following is a 266-amino-acid chain: Imidazole glycerol phosphate synthase subunit HisF (266 aa).

Residues Asp-11 and Asp-130 contribute to the active site.

This sequence belongs to the HisA/HisF family. Heterodimer of HisH and HisF.

The protein localises to the cytoplasm. The enzyme catalyses 5-[(5-phospho-1-deoxy-D-ribulos-1-ylimino)methylamino]-1-(5-phospho-beta-D-ribosyl)imidazole-4-carboxamide + L-glutamine = D-erythro-1-(imidazol-4-yl)glycerol 3-phosphate + 5-amino-1-(5-phospho-beta-D-ribosyl)imidazole-4-carboxamide + L-glutamate + H(+). The protein operates within amino-acid biosynthesis; L-histidine biosynthesis; L-histidine from 5-phospho-alpha-D-ribose 1-diphosphate: step 5/9. IGPS catalyzes the conversion of PRFAR and glutamine to IGP, AICAR and glutamate. The HisF subunit catalyzes the cyclization activity that produces IGP and AICAR from PRFAR using the ammonia provided by the HisH subunit. This Nitrosopumilus maritimus (strain SCM1) protein is Imidazole glycerol phosphate synthase subunit HisF.